The sequence spans 521 residues: Tetratricopeptide repeat and J domain-containing co-chaperone DNJ1 (521 aa).

The first 21 residues, 1–21, serve as a signal peptide directing secretion; that stretch reads MHLNLAGLAVAATAFLATASA. TPR repeat units lie at residues 33 to 66, 67 to 100, 102 to 134, 176 to 209, 211 to 244, 315 to 348, and 349 to 382; these read VSNL…DPTN, YLSL…KPGF, GAHL…PKSA, PHLR…KPGD, SPHI…DPDS, LENL…NPDS, and FWGL…RPDQ. One can recognise a J domain in the interval 404–473; the sequence is DYYKVLGVEN…ELRARFDRGD (70 aa). The span at 464–474 shows a compositional bias: basic and acidic residues; it reads ELRARFDRGDD. The tract at residues 464–521 is disordered; it reads ELRARFDRGDDPNSQERPNPFQGQGNPFGGGHPFMFQQGGGGGGPNIKFQFGGQPFGF. The span at 489–508 shows a compositional bias: gly residues; it reads NPFGGGHPFMFQQGGGGGGP. Low complexity predominate over residues 509 to 521; sequence NIKFQFGGQPFGF.

The protein localises to the endoplasmic reticulum lumen. Its function is as follows. Endoplasmic reticulum co-chaperone required for the of virulence factors such as PG1, the major endopolygalacturonase produced during the infection of tomato plants. This is Tetratricopeptide repeat and J domain-containing co-chaperone DNJ1 from Fusarium oxysporum f. sp. lycopersici (strain 4287 / CBS 123668 / FGSC 9935 / NRRL 34936) (Fusarium vascular wilt of tomato).